A 284-amino-acid polypeptide reads, in one-letter code: Shikimate dehydrogenase (NADP(+)) (284 aa).

Residues 20–22 (SIS) and Ser-67 contribute to the shikimate site. Lys-71 serves as the catalytic Proton acceptor. An NADP(+)-binding site is contributed by Asp-83. Shikimate is bound by residues Asn-92 and Asp-107. NADP(+) contacts are provided by residues 129–133 (GAGGA) and Ile-227. Tyr-229 is a shikimate binding site. Gly-250 is an NADP(+) binding site.

This sequence belongs to the shikimate dehydrogenase family. Homodimer.

It catalyses the reaction shikimate + NADP(+) = 3-dehydroshikimate + NADPH + H(+). It participates in metabolic intermediate biosynthesis; chorismate biosynthesis; chorismate from D-erythrose 4-phosphate and phosphoenolpyruvate: step 4/7. Involved in the biosynthesis of the chorismate, which leads to the biosynthesis of aromatic amino acids. Catalyzes the reversible NADPH linked reduction of 3-dehydroshikimate (DHSA) to yield shikimate (SA). The polypeptide is Shikimate dehydrogenase (NADP(+)) (Streptococcus pneumoniae (strain CGSP14)).